Here is a 171-residue protein sequence, read N- to C-terminus: MPLTWKDSGLRWYWVAVLVFFADQLSKQWVLANFDLHESLNLLPFFNFTYVRNYGAAFSFLSDAGGWQRWLFTIVAVGFSTLLTVWLRRQSASLLKLNLAYTLVIGGALGNLVDRLMHGFVVDFIDFFWAKSHYPAFNIADSAICIGAVLIIWDAFLSGKSETDSAEGVKK.

Helical transmembrane passes span Trp-12 to Ala-32, Trp-67 to Leu-87, and Ser-93 to Val-113. Residues Asp-123 and Asp-141 contribute to the active site. Residues Phe-137–Leu-157 traverse the membrane as a helical segment.

It belongs to the peptidase A8 family.

The protein resides in the cell inner membrane. It carries out the reaction Release of signal peptides from bacterial membrane prolipoproteins. Hydrolyzes -Xaa-Yaa-Zaa-|-(S,diacylglyceryl)Cys-, in which Xaa is hydrophobic (preferably Leu), and Yaa (Ala or Ser) and Zaa (Gly or Ala) have small, neutral side chains.. It participates in protein modification; lipoprotein biosynthesis (signal peptide cleavage). In terms of biological role, this protein specifically catalyzes the removal of signal peptides from prolipoproteins. The chain is Lipoprotein signal peptidase from Shewanella baltica (strain OS223).